A 427-amino-acid chain; its full sequence is Peptidase B (427 aa).

Mn(2+) contacts are provided by Lys-195 and Asp-200. Residue Lys-207 is part of the active site. 3 residues coordinate Mn(2+): Asp-218, Asp-277, and Glu-279. The active site involves Arg-281.

It belongs to the peptidase M17 family. In terms of assembly, homohexamer. The cofactor is Mn(2+).

The protein resides in the cytoplasm. The enzyme catalyses Release of an N-terminal amino acid, Xaa, from a peptide or arylamide. Xaa is preferably Glu or Asp but may be other amino acids, including Leu, Met, His, Cys and Gln.. Functionally, probably plays an important role in intracellular peptide degradation. In Escherichia coli (strain UTI89 / UPEC), this protein is Peptidase B.